Here is a 492-residue protein sequence, read N- to C-terminus: 2,3-bisphosphoglycerate-independent phosphoglycerate mutase (492 aa).

2 residues coordinate Mn(2+): D11 and S61. Catalysis depends on S61, which acts as the Phosphoserine intermediate. Residues H118, 147 to 148 (RD), R178, R184, 248 to 251 (RNDR), and K320 each bind substrate. The Mn(2+) site is built by D386, H390, D427, H428, and H445.

This sequence belongs to the BPG-independent phosphoglycerate mutase family. As to quaternary structure, monomer. Mn(2+) is required as a cofactor.

It carries out the reaction (2R)-2-phosphoglycerate = (2R)-3-phosphoglycerate. The protein operates within carbohydrate degradation; glycolysis; pyruvate from D-glyceraldehyde 3-phosphate: step 3/5. Catalyzes the interconversion of 2-phosphoglycerate and 3-phosphoglycerate. The sequence is that of 2,3-bisphosphoglycerate-independent phosphoglycerate mutase from Campylobacter jejuni subsp. jejuni serotype O:23/36 (strain 81-176).